Here is a 244-residue protein sequence, read N- to C-terminus: MILFPAIDLKNGQCVRLEQGDMARATVFNLDPAAQAKSFADQGFEYLHVVDLDGAFAGKPMNAQAVEAMLKIVKMPVQLGGGIRDLKTVEAWLGKGITRVIIGTAAVRDPELVKMAAKAFPGRVAVGLDARDGKVAVEGWAETSEVTALDIAKRFEDAGVAAIIFTDIARDGLLKGLNLDATIALGDAISIPVIASGGLASIEDVKAMLTPRARKLEGAIAGRALYDGRLDPAEALALIRAISG.

Aspartate 8 functions as the Proton acceptor in the catalytic mechanism. Aspartate 129 acts as the Proton donor in catalysis.

This sequence belongs to the HisA/HisF family.

It is found in the cytoplasm. The enzyme catalyses 1-(5-phospho-beta-D-ribosyl)-5-[(5-phospho-beta-D-ribosylamino)methylideneamino]imidazole-4-carboxamide = 5-[(5-phospho-1-deoxy-D-ribulos-1-ylimino)methylamino]-1-(5-phospho-beta-D-ribosyl)imidazole-4-carboxamide. The protein operates within amino-acid biosynthesis; L-histidine biosynthesis; L-histidine from 5-phospho-alpha-D-ribose 1-diphosphate: step 4/9. The polypeptide is 1-(5-phosphoribosyl)-5-[(5-phosphoribosylamino)methylideneamino] imidazole-4-carboxamide isomerase (Bradyrhizobium sp. (strain ORS 278)).